We begin with the raw amino-acid sequence, 448 residues long: Solute carrier family 52, riboflavin transporter, member 1 (448 aa).

A run of 5 helical transmembrane segments spans residues 14 to 34 (LLVA…WVEL), 47 to 67 (LPSY…VVTL), 79 to 99 (VPIQ…APLW), 124 to 144 (ACCT…PPFL), and 147 to 167 (FFLG…VQGV). N-linked (GlcNAc...) asparagine glycosylation is present at Asn-178. Residues 191-211 (FPASTFFWALTALLVTSAAAF) traverse the membrane as a helical segment. Residues 225-267 (TTGGSGPELQLGSPGAEEEEKEEEEALPLQEPPSQAAGTIPGP) form a disordered region. Residues 240-250 (AEEEEKEEEEA) show a composition bias toward acidic residues. A run of 5 helical transmembrane segments spans residues 280–300 (AFLL…LPSV), 315–335 (LAVV…MGVL), 342–362 (LVGL…LAIL), 369–389 (VGTT…LCVF), and 407–427 (ALLA…GAMF).

The protein belongs to the riboflavin transporter family. In terms of tissue distribution, widely expressed. Highly expressed in the testis, placenta and small intestine. Expressed at lower level in other tissues.

The protein resides in the cell membrane. The catalysed reaction is riboflavin(in) = riboflavin(out). With respect to regulation, the activity is strongly inhibited by riboflavin analogs, such as lumiflavin. Weakly inhibited by flavin adenine dinucleotide (FAD). In terms of biological role, plasma membrane transporter mediating the uptake by cells of the water soluble vitamin B2/riboflavin that plays a key role in biochemical oxidation-reduction reactions of the carbohydrate, lipid, and amino acid metabolism. Humans are unable to synthesize vitamin B2/riboflavin and must obtain it via intestinal absorption. Functionally, (Microbial infection) May function as a cell receptor to retroviral envelopes similar to the porcine endogenous retrovirus (PERV-A). The polypeptide is Solute carrier family 52, riboflavin transporter, member 1 (Homo sapiens (Human)).